The primary structure comprises 173 residues: Phosphopantetheine adenylyltransferase (173 aa).

Residue Ser-9 participates in substrate binding. ATP is bound by residues 9–10 (SF) and His-17. 3 residues coordinate substrate: Lys-41, Thr-73, and Arg-87. ATP-binding positions include 88 to 90 (GLR), Glu-98, and 123 to 129 (YQHLSSS).

The protein belongs to the bacterial CoaD family. As to quaternary structure, homohexamer. Requires Mg(2+) as cofactor.

It is found in the cytoplasm. It carries out the reaction (R)-4'-phosphopantetheine + ATP + H(+) = 3'-dephospho-CoA + diphosphate. Its pathway is cofactor biosynthesis; coenzyme A biosynthesis; CoA from (R)-pantothenate: step 4/5. Reversibly transfers an adenylyl group from ATP to 4'-phosphopantetheine, yielding dephospho-CoA (dPCoA) and pyrophosphate. This Limosilactobacillus reuteri (strain DSM 20016) (Lactobacillus reuteri) protein is Phosphopantetheine adenylyltransferase.